Reading from the N-terminus, the 348-residue chain is Calcium/calmodulin-dependent protein kinase type 1 (348 aa).

Residues 7-22 (RDGSGPAPNATIREKY) carry the Nuclear localization signal 1 motif. Residues 22–278 (YDFRDVLGTG…CQDALSHPWI (257 aa)) form the Protein kinase domain. ATP contacts are provided by residues 28-36 (LGTGAFSKV) and Lys52. Residues 71 to 78 (KVLRKLRH) carry the Nuclear localization signal 2 motif. The Proton acceptor role is filled by Asp144. Thr179 carries the post-translational modification Phosphothreonine; by ckk-1. Residues 278-318 (ISGNTAYTHDIHGTVAVHLKKSLAKRNWKKAYNAAAAIRQL) form an autoinhibitory domain region. A Nuclear export sequence motif is present at residues 288 to 294 (IHGTVAV). Positions 297–307 (KKSLAKRNWKK) match the Nuclear localization signal 3 motif. Positions 298–319 (KSLAKRNWKKAYNAAAAIRQLQ) are calmodulin-binding. The span at 327-338 (SNRLQKQASQQQ) shows a compositional bias: polar residues. The segment at 327–348 (SNRLQKQASQQQPEPPTPAFHA) is disordered. The segment covering 339–348 (PEPPTPAFHA) has biased composition (pro residues).

It belongs to the protein kinase superfamily. CAMK Ser/Thr protein kinase family. CaMK subfamily. As to quaternary structure, interacts with importin ima-3; affinity for ima-3 is increased in the presence of Ca(2+) and calmodulin and leads to increased nuclear accumulation of cmk-1 in FLP neurons upon prolonged heat activation. The cofactor is Mg(2+). Phosphorylation at Thr-179 can promote both nuclear export and import, sustaining nucleocytoplasmic shuttling. As to expression, expressed in head and tail neurons and vulval muscles. Throughout the nervous system. Detected in neurites and neuronal cell bodies. Expressed in the mechanosensory neurons, AVM and ALM, and in the interneurons, AVA, AVB and AVD. Expressed in the right and left ASE neurons where it functions cell-autonomously to control salt-avoidance learning. Expressed in FLP and AFD thermosensory neurons.

Its subcellular location is the nucleus. The protein localises to the cytoplasm. It catalyses the reaction L-seryl-[protein] + ATP = O-phospho-L-seryl-[protein] + ADP + H(+). It carries out the reaction L-threonyl-[protein] + ATP = O-phospho-L-threonyl-[protein] + ADP + H(+). With respect to regulation, activated by Ca(2+)/calmodulin. Binding of calmodulin results in a conformational change that generates functional binding sites for both substrate and ATP, and thus relieves autoinhibition and lowers the Km of substrate binding. Must be phosphorylated by ckk-1 to be maximally active but this does not appear to be required for activity in AFD neurons. Functionally, calcium/calmodulin-dependent protein kinase that operates in the calcium-triggered CaMKK-CaMK1 signaling cascade which results in transcriptional activation. Transcriptional activation occurs at least in part through phosphorylation of crh-1. Regulates gene expression, sensory morphology, and function of the AFD thermosensory neurons. Involved in long-term adaptation of AFD neurons to temperatures warmer than the initial acclimatized cultivation temperature. Acts in the FLP thermal nociceptors to moderate the responsiveness to noxious heat and controls neuropeptide release from FLP neurons in response to temperature elevations. Regulates the dauer decision, the decision of the larvae to enter into the alternative stress-resistant and long-lived dauer developmental stage, based on the feeding state, primarily in the AWC sensory neurons. Acts non cell-autonomously in the AWC neurons to regulate expression of the daf-28 insulin-like peptide and cell-autonomously in the ASI sensory neurons to regulate expression of the growth promoting daf-7 in a food-regulated manner. Plays a role in memory-based thermal response of an individual AFD neuron cell. Influences habituation and sensitivity to repeated mechanosensory stimuli. Involved in chemotaxis response in AWC neurons to attractant 2-heptanone, a volatile organic compound emitted by the nematode pathogenic bacterium B.nematocida B16. Acts in the ASE salt-sensing neurons to promote a type of aversive gustatory-associated learning called salt-avoidance learning via regulation of crh-1 signaling and the promotion of long-term memory formation, but is not involved in salt attraction. Represses transcription of glutamate receptor glr-1 in the nucleus basally and in response to changes in synaptic activity. The sequence is that of Calcium/calmodulin-dependent protein kinase type 1 from Caenorhabditis elegans.